A 231-amino-acid chain; its full sequence is MTDTLMNADPPRRIRSFVLRQGRITASQKNALENLWPRYGLDPAAAFDPAAVFGRRAPLTLEIGFGNGESLAAMAQSLPAEDFIGAEVHPPGIGHLLIELERRGLDNVRVFRVDAVELLENCIPEGALARILVFFPDPWHKQRHKKRRLVSPAFARLAASRLAPGGVFHAATDWEDYAMQMLEVLNGCETLVNQAPDGRFSERPAYRTPTKFEQRGQRLGHGVWDLVYRRS.

Residues E62, E87, D114, and D137 each contribute to the S-adenosyl-L-methionine site. D137 is an active-site residue. Residues K141, D173, and T210–E213 each bind substrate.

Belongs to the class I-like SAM-binding methyltransferase superfamily. TrmB family.

The catalysed reaction is guanosine(46) in tRNA + S-adenosyl-L-methionine = N(7)-methylguanosine(46) in tRNA + S-adenosyl-L-homocysteine. It participates in tRNA modification; N(7)-methylguanine-tRNA biosynthesis. Catalyzes the formation of N(7)-methylguanine at position 46 (m7G46) in tRNA. The polypeptide is tRNA (guanine-N(7)-)-methyltransferase (Methylococcus capsulatus (strain ATCC 33009 / NCIMB 11132 / Bath)).